The primary structure comprises 235 residues: Uracil-DNA glycosylase (235 aa).

The Proton acceptor role is filled by aspartate 71.

The protein belongs to the uracil-DNA glycosylase (UDG) superfamily. UNG family.

Its subcellular location is the cytoplasm. It carries out the reaction Hydrolyzes single-stranded DNA or mismatched double-stranded DNA and polynucleotides, releasing free uracil.. In terms of biological role, excises uracil residues from the DNA which can arise as a result of misincorporation of dUMP residues by DNA polymerase or due to deamination of cytosine. The protein is Uracil-DNA glycosylase of Helicobacter hepaticus (strain ATCC 51449 / 3B1).